A 483-amino-acid polypeptide reads, in one-letter code: Altronate oxidoreductase (483 aa).

18-29 provides a ligand contact to NAD(+); it reads IIQFGEGNFLRA.

The protein belongs to the mannitol dehydrogenase family. UxaB subfamily.

It catalyses the reaction D-altronate + NAD(+) = keto-D-tagaturonate + NADH + H(+). It participates in carbohydrate metabolism; pentose and glucuronate interconversion. In Escherichia coli O157:H7, this protein is Altronate oxidoreductase (uxaB).